We begin with the raw amino-acid sequence, 291 residues long: 5'-3' exonuclease (291 aa).

The 5'-3' exonuclease domain occupies 176–269 (APYQVVEYKG…DLTGLKPIQK (94 aa)).

Functionally, 5'-3' exonuclease acting preferentially on double-stranded DNA. The protein is 5'-3' exonuclease (polA) of Mycoplasma genitalium (strain ATCC 33530 / DSM 19775 / NCTC 10195 / G37) (Mycoplasmoides genitalium).